The primary structure comprises 292 residues: Ribosomal protein L11 methyltransferase (292 aa).

S-adenosyl-L-methionine contacts are provided by Thr-144, Gly-165, Asp-187, and Asn-229.

It belongs to the methyltransferase superfamily. PrmA family.

The protein localises to the cytoplasm. It carries out the reaction L-lysyl-[protein] + 3 S-adenosyl-L-methionine = N(6),N(6),N(6)-trimethyl-L-lysyl-[protein] + 3 S-adenosyl-L-homocysteine + 3 H(+). Methylates ribosomal protein L11. The chain is Ribosomal protein L11 methyltransferase from Pseudomonas savastanoi pv. phaseolicola (strain 1448A / Race 6) (Pseudomonas syringae pv. phaseolicola (strain 1448A / Race 6)).